A 390-amino-acid chain; its full sequence is LL-diaminopimelate aminotransferase 2 (390 aa).

Residues Tyr13 and Gly38 each coordinate substrate. Residues Tyr67, Ser102–Lys103, Tyr127, Asn177, Tyr208, and Ser236–Ser238 contribute to the pyridoxal 5'-phosphate site. Substrate contacts are provided by Lys103, Tyr127, and Asn177. An N6-(pyridoxal phosphate)lysine modification is found at Lys239. Residue Arg247 coordinates pyridoxal 5'-phosphate. Arg365 contacts substrate.

The protein belongs to the class-I pyridoxal-phosphate-dependent aminotransferase family. LL-diaminopimelate aminotransferase subfamily. In terms of assembly, homodimer. Requires pyridoxal 5'-phosphate as cofactor.

It carries out the reaction (2S,6S)-2,6-diaminopimelate + 2-oxoglutarate = (S)-2,3,4,5-tetrahydrodipicolinate + L-glutamate + H2O + H(+). Its pathway is amino-acid biosynthesis; L-lysine biosynthesis via DAP pathway; LL-2,6-diaminopimelate from (S)-tetrahydrodipicolinate (aminotransferase route): step 1/1. In terms of biological role, involved in the synthesis of meso-diaminopimelate (m-DAP or DL-DAP), required for both lysine and peptidoglycan biosynthesis. Catalyzes the direct conversion of tetrahydrodipicolinate to LL-diaminopimelate. In Trichormus variabilis (strain ATCC 29413 / PCC 7937) (Anabaena variabilis), this protein is LL-diaminopimelate aminotransferase 2.